The following is a 248-amino-acid chain: 3-deoxy-manno-octulosonate cytidylyltransferase (248 aa).

The protein belongs to the KdsB family.

The protein resides in the cytoplasm. The catalysed reaction is 3-deoxy-alpha-D-manno-oct-2-ulosonate + CTP = CMP-3-deoxy-beta-D-manno-octulosonate + diphosphate. Its pathway is nucleotide-sugar biosynthesis; CMP-3-deoxy-D-manno-octulosonate biosynthesis; CMP-3-deoxy-D-manno-octulosonate from 3-deoxy-D-manno-octulosonate and CTP: step 1/1. It functions in the pathway bacterial outer membrane biogenesis; lipopolysaccharide biosynthesis. Its function is as follows. Activates KDO (a required 8-carbon sugar) for incorporation into bacterial lipopolysaccharide in Gram-negative bacteria. The sequence is that of 3-deoxy-manno-octulosonate cytidylyltransferase from Cronobacter sakazakii (strain ATCC BAA-894) (Enterobacter sakazakii).